Consider the following 1793-residue polypeptide: Transposon Ty1-H Gag-Pol polyprotein (1793 aa).

Polar residues-rich tracts occupy residues 1–10 (MESQQLSNYP), 48–60 (TKAN…TPAS), and 127–152 (QSQF…GNTF). 3 disordered regions span residues 1–84 (MESQ…QNGP), 126–174 (PQSQ…PPPM), and 390–459 (GSRN…SKST). Residues 153–165 (TDSSSADSDMTST) show a composition bias toward low complexity. Residues 337 to 439 (NNGIHINNKV…NSKSKTARAH (103 aa)) form an RNA-binding region. Residues 440-456 (NVSTSNNSPSTDNDSIS) are compositionally biased toward low complexity. Catalysis depends on aspartate 499, which acts as the For protease activity; shared with dimeric partner. The interval 621 to 678 (NVHTSESTRKYPYPFIHRMLAHANAQTIRYSLKNNTITYFNESDVDWSSAIDYQCPDC) is integrase-type zinc finger-like. The Integrase catalytic domain maps to 698–873 (NSYEPFQYLH…AGLDISTLLP (176 aa)). 2 residues coordinate Mg(2+): aspartate 709 and aspartate 774. The tract at residues 996–1208 (AVSPTDSTPP…SSLGGIGDSN (213 aa)) is disordered. Residues 998-1007 (SPTDSTPPST) are compositionally biased toward low complexity. Residues 1043-1053 (STPQISDIEST) are compositionally biased toward polar residues. A compositionally biased stretch (basic and acidic residues) spans 1076 to 1091 (ESSHASKSKDFRHSDS). 2 stretches are compositionally biased toward polar residues: residues 1092–1120 (YSDN…QTSE) and 1133–1144 (SIDTSSSESNSL). The Bipartite nuclear localization signal motif lies at 1216-1250 (KKRSLEDNETEIKVSRDTWNTKNMRSLEPPRSKKR). Residues 1376–1514 (NNYYITQLDI…DILGLEIKYQ (139 aa)) enclose the Reverse transcriptase Ty1/copia-type domain. Mg(2+) is bound by residues aspartate 1384, aspartate 1465, aspartate 1466, aspartate 1648, glutamate 1690, and aspartate 1723. One can recognise an RNase H Ty1/copia-type domain in the interval 1648-1790 (DASYGNQPYY…IKTFKLLTNK (143 aa)).

The capsid protein forms a homotrimer, from which the VLPs are assembled. The protease is a homodimer, whose active site consists of two apposed aspartic acid residues. Initially, virus-like particles (VLPs) are composed of the structural unprocessed proteins Gag and Gag-Pol, and also contain the host initiator methionine tRNA (tRNA(i)-Met) which serves as a primer for minus-strand DNA synthesis, and a dimer of genomic Ty RNA. Processing of the polyproteins occurs within the particle and proceeds by an ordered pathway, called maturation. First, the protease (PR) is released by autocatalytic cleavage of the Gag-Pol polyprotein yielding capsid protein p45 and a Pol-p154 precursor protein. This cleavage is a prerequisite for subsequent processing of Pol-p154 at the remaining sites to release the mature structural and catalytic proteins. Maturation takes place prior to the RT reaction and is required to produce transposition-competent VLPs.

Its subcellular location is the cytoplasm. It is found in the nucleus. The enzyme catalyses DNA(n) + a 2'-deoxyribonucleoside 5'-triphosphate = DNA(n+1) + diphosphate. The catalysed reaction is Endonucleolytic cleavage to 5'-phosphomonoester.. Its function is as follows. Capsid protein (CA) is the structural component of the virus-like particle (VLP), forming the shell that encapsulates the retrotransposons dimeric RNA genome. The particles are assembled from trimer-clustered units and there are holes in the capsid shells that allow for the diffusion of macromolecules. CA also has nucleocapsid-like chaperone activity, promoting primer tRNA(i)-Met annealing to the multipartite primer-binding site (PBS), dimerization of Ty1 RNA and initiation of reverse transcription. Functionally, the aspartyl protease (PR) mediates the proteolytic cleavages of the Gag and Gag-Pol polyproteins after assembly of the VLP. In terms of biological role, reverse transcriptase/ribonuclease H (RT) is a multifunctional enzyme that catalyzes the conversion of the retro-elements RNA genome into dsDNA within the VLP. The enzyme displays a DNA polymerase activity that can copy either DNA or RNA templates, and a ribonuclease H (RNase H) activity that cleaves the RNA strand of RNA-DNA heteroduplexes during plus-strand synthesis and hydrolyzes RNA primers. The conversion leads to a linear dsDNA copy of the retrotransposon that includes long terminal repeats (LTRs) at both ends. Integrase (IN) targets the VLP to the nucleus, where a subparticle preintegration complex (PIC) containing at least integrase and the newly synthesized dsDNA copy of the retrotransposon must transit the nuclear membrane. Once in the nucleus, integrase performs the integration of the dsDNA into the host genome. The polypeptide is Transposon Ty1-H Gag-Pol polyprotein (TY1B-H) (Saccharomyces cerevisiae (strain ATCC 204508 / S288c) (Baker's yeast)).